Reading from the N-terminus, the 580-residue chain is Potassium-transporting ATPase potassium-binding subunit (580 aa).

A run of 10 helical transmembrane segments spans residues 3–23, 65–85, 136–156, 179–199, 263–283, 293–313, 399–419, 436–456, 504–524, and 546–566; these read ASGA…SVPL, DYAF…YALQ, GLGV…VALI, LYIL…QGVV, LSNF…CHTF, GWAV…ACVA, GLYG…LMVG, MASL…AIAV, AIGV…LALA, and LFVG…FVPA.

Belongs to the KdpA family. As to quaternary structure, the system is composed of three essential subunits: KdpA, KdpB and KdpC.

The protein localises to the cell inner membrane. Part of the high-affinity ATP-driven potassium transport (or Kdp) system, which catalyzes the hydrolysis of ATP coupled with the electrogenic transport of potassium into the cytoplasm. This subunit binds the periplasmic potassium ions and delivers the ions to the membrane domain of KdpB through an intramembrane tunnel. The protein is Potassium-transporting ATPase potassium-binding subunit of Sorangium cellulosum (strain So ce56) (Polyangium cellulosum (strain So ce56)).